Consider the following 385-residue polypeptide: 1-deoxy-D-xylulose 5-phosphate reductoisomerase 1 (385 aa).

Residues Thr11, Gly12, Ser13, Ile14, Asn39, and Asn122 each contribute to the NADPH site. Residue Lys123 coordinates 1-deoxy-D-xylulose 5-phosphate. Glu124 is a binding site for NADPH. Asp148 lines the Mn(2+) pocket. 1-deoxy-D-xylulose 5-phosphate contacts are provided by Ser149, Glu150, Ser174, and His197. Glu150 serves as a coordination point for Mn(2+). Gly203 provides a ligand contact to NADPH. Ser210, Asn215, Lys216, and Glu219 together coordinate 1-deoxy-D-xylulose 5-phosphate. Residue Glu219 coordinates Mn(2+).

Belongs to the DXR family. Mg(2+) serves as cofactor. Requires Mn(2+) as cofactor.

The catalysed reaction is 2-C-methyl-D-erythritol 4-phosphate + NADP(+) = 1-deoxy-D-xylulose 5-phosphate + NADPH + H(+). The protein operates within isoprenoid biosynthesis; isopentenyl diphosphate biosynthesis via DXP pathway; isopentenyl diphosphate from 1-deoxy-D-xylulose 5-phosphate: step 1/6. Its function is as follows. Catalyzes the NADPH-dependent rearrangement and reduction of 1-deoxy-D-xylulose-5-phosphate (DXP) to 2-C-methyl-D-erythritol 4-phosphate (MEP). The protein is 1-deoxy-D-xylulose 5-phosphate reductoisomerase 1 of Bacillus cereus (strain ATCC 14579 / DSM 31 / CCUG 7414 / JCM 2152 / NBRC 15305 / NCIMB 9373 / NCTC 2599 / NRRL B-3711).